A 142-amino-acid polypeptide reads, in one-letter code: Large ribosomal subunit protein uL16 (142 aa).

The protein belongs to the universal ribosomal protein uL16 family. As to quaternary structure, part of the 50S ribosomal subunit.

Functionally, binds 23S rRNA and is also seen to make contacts with the A and possibly P site tRNAs. This chain is Large ribosomal subunit protein uL16, found in Mycoplasmopsis pulmonis (strain UAB CTIP) (Mycoplasma pulmonis).